The chain runs to 430 residues: MSTIRSIHAREILDSRGNPTLEAEVILEDGSFGRAAVPSGASTGTKEAVELRDGDKTRYLGKGVRKAVDNVNTTIAAALKGFEATDQAGLDRRLIDLDGTENKGRLGANALLGVSMAAAHAAAASNKQALWQYLAARTGVTPSLPVPMMNIINGGAHADNNVDFQEFMVLPVGFTSFSEALRAGTEIFHSLKSVLKGHGLSTAVGDEGGFAPDFRSNVEALDTILEAIGKAGYTAGEDVLLGLDVASSEFFENGKYNLVGENKRLTSEQFVDFLADWAAQYPIITIEDGLAENDWAGWKLLTDRIGKKVQLVGDDLFVTNPKIFQEGIDSGTANAILIKVNQIGTLSETLEAIAMADRAGYAAVVSHRSGETEDTTIADIAVATTATQIKTGSLCRSDRVAKYNQLLRIEEALGAGARYAGRDAFVSLKR.

Gln165 provides a ligand contact to (2R)-2-phosphoglycerate. The Proton donor role is filled by Glu207. Residues Asp244, Glu287, and Asp314 each contribute to the Mg(2+) site. Lys339, Arg368, Ser369, and Lys390 together coordinate (2R)-2-phosphoglycerate. Lys339 (proton acceptor) is an active-site residue.

The protein belongs to the enolase family. Component of the RNA degradosome, a multiprotein complex involved in RNA processing and mRNA degradation. Requires Mg(2+) as cofactor.

It localises to the cytoplasm. The protein localises to the secreted. Its subcellular location is the cell surface. The catalysed reaction is (2R)-2-phosphoglycerate = phosphoenolpyruvate + H2O. Its pathway is carbohydrate degradation; glycolysis; pyruvate from D-glyceraldehyde 3-phosphate: step 4/5. Catalyzes the reversible conversion of 2-phosphoglycerate (2-PG) into phosphoenolpyruvate (PEP). It is essential for the degradation of carbohydrates via glycolysis. This chain is Enolase, found in Stenotrophomonas maltophilia (strain K279a).